The primary structure comprises 492 residues: Probable malate:quinone oxidoreductase 1 (492 aa).

The protein belongs to the MQO family. Requires FAD as cofactor.

The catalysed reaction is (S)-malate + a quinone = a quinol + oxaloacetate. The protein operates within carbohydrate metabolism; tricarboxylic acid cycle; oxaloacetate from (S)-malate (quinone route): step 1/1. This is Probable malate:quinone oxidoreductase 1 from Staphylococcus aureus (strain MRSA252).